Here is a 441-residue protein sequence, read N- to C-terminus: Trigger factor (441 aa).

The PPIase FKBP-type domain maps to 175–257 (GDFISLSLHV…VNAVIEVVAP (83 aa)).

Belongs to the FKBP-type PPIase family. Tig subfamily.

It localises to the cytoplasm. The enzyme catalyses [protein]-peptidylproline (omega=180) = [protein]-peptidylproline (omega=0). Involved in protein export. Acts as a chaperone by maintaining the newly synthesized protein in an open conformation. Functions as a peptidyl-prolyl cis-trans isomerase. This Chlamydia abortus (strain DSM 27085 / S26/3) (Chlamydophila abortus) protein is Trigger factor.